The following is a 336-amino-acid chain: Potassium channel subfamily K member 1 (336 aa).

The Cytoplasmic portion of the chain corresponds to 1–20 (MLQSLAGSSCVRLVERHRSA). Residues 21-41 (WCFGFLVLGYLLYLVFGAVVF) form a helical membrane-spanning segment. The Extracellular portion of the chain corresponds to 42 to 103 (SSVELPYEDL…SNASGNWNWD (62 aa)). Asn-95 carries an N-linked (GlcNAc...) asparagine glycan. The segment at residues 104–116 (FTSALFFASTVLS) is an intramembrane region (helical). The stretch at 117 to 122 (TTGYGH) is an intramembrane region. The selectivity filter 1 stretch occupies residues 117–122 (TTGYGH). Residues 123-132 (TVPLSDGGKA) lie on the Extracellular side of the membrane. Residues 133 to 156 (FCIIYSVIGIPFTLLFLTAVVQRV) traverse the membrane as a helical segment. The Cytoplasmic segment spans residues 157–181 (TVHVTRRPVLYFHIRWGFSKQVVAI). The chain crosses the membrane as a helical span at residues 182–202 (VHAVLLGFVTVSCFFFIPAAV). Over 203 to 211 (FSVLEDDWN) the chain is Extracellular. Residues 212–224 (FLESFYFCFISLS) constitute an intramembrane region (helical). The tract at residues 225–230 (TIGLGD) is selectivity filter 2. Residues 225–231 (TIGLGDY) lie within the membrane without spanning it. Residues 232 to 243 (VPGEGYNQKFRE) are Extracellular-facing. A helical transmembrane segment spans residues 244-267 (LYKIGITCYLLLGLIAMLVVLETF). At 268 to 336 (CELHELKKFR…PPYEDGSADH (69 aa)) the chain is on the cytoplasmic side. A Glycyl lysine isopeptide (Lys-Gly) (interchain with G-Cter in SUMO) cross-link involves residue Lys-274. The interval 293-299 (IMEHDQL) is important for intracellular retention in recycling endosomes. Residues 310–336 (GLKEEQKQSEPFVASQSPPYEDGSADH) are disordered. Ser-326 is modified (phosphoserine).

It belongs to the two pore domain potassium channel (TC 1.A.1.8) family. Homodimer; disulfide-linked. Heterodimer with KCNK2; disulfide-linked. In astrocytes, forms mostly heterodimeric potassium channels with KCNK2, with only a minor proportion of functional channels containing homodimeric KCNK1. Interacts with KCNK3 and KCNK9, forming functional heterodimeric channels. Interacts with GNG4. Identified in a complex with PSD and ARF6; interacts only with PSD that is bound to ARF6. Interacts with UBE2I. Sumoylation is controversial. Sumoylated by UBE2I. Not sumoylated when expressed in xenopus oocytes or mammalian cells. Sumoylation inactivates the channel, but does not interfere with expression at the cell membrane. Sumoylation of a single subunit is sufficient to silence the dimeric channel. Sumoylation of KCNK1 is sufficient to silence heterodimeric channels formed by KCNK1 and KCNK3 or KCNK9. Desumoylated by SENP1; this activates the channel. Desumoylated by SENP1; this strongly increases halothane-mediated activation of heterodimeric channels formed with KCNK9. SENP1 treatment has no effect. As to expression, detected in spiral ganglion neurons. Detected in hippocampus CA1 and CA1 regions and in the molecular layer of the dentate gyrus. Detected on hippocampus astrocytes. Highly expressed in the stria vascularis in the cochlea. Detected in pancreas islet beta cells. Detected in kidney, at brush border membranes in proximal tubules and in cytoplasmic structures in distal convoluted tubules, thick ascending limbs and collecting ducts (at protein level). Widely expressed. Detected in spiral ganglion cells. Highest expression in brain, kidney, thyroid, salivary gland, adrenal gland, prostate, epididymis, uterus, placenta, colon and jejunum. Moderate expression in eyes, pituitary, pancreas, smooth muscle, testis and ovary. Very low levels in lung, aorta, liver, heart, skeletal muscle, thymus and spleen. In the brain, highest expression in cerebellar granule cells, brainstem, hippocampus and cerebral cortex.

Its subcellular location is the cell membrane. The protein resides in the recycling endosome. It localises to the apical cell membrane. The protein localises to the cytoplasmic vesicle. It is found in the perikaryon. Its subcellular location is the cell projection. The protein resides in the dendrite. It localises to the synaptic cell membrane. The enzyme catalyses K(+)(in) = K(+)(out). The catalysed reaction is NH4(+)(in) = NH4(+)(out). It carries out the reaction Na(+)(in) = Na(+)(out). It catalyses the reaction Rb(+)(in) = Rb(+)(out). The enzyme catalyses Cs(+)(in) = Cs(+)(out). The catalysed reaction is Li(+)(in) = Li(+)(out). It carries out the reaction L-glutamate(out) = L-glutamate(in). It catalyses the reaction chloride(in) = chloride(out). Its activity is regulated as follows. Inhibited by quinine, quinidine, barium, and internal acidification. In terms of biological role, ion channel that contributes to passive transmembrane potassium transport and to the regulation of the resting membrane potential in brain astrocytes, but also in kidney and in other tissues. Forms dimeric channels through which potassium ions pass in accordance with their electrochemical gradient. The channel is selective for K(+) ions at physiological potassium concentrations and at neutral pH, but becomes permeable to Na(+) at subphysiological K(+) levels and upon acidification of the extracellular medium. The homodimer has very low potassium channel activity, when expressed in heterologous systems, and can function as weakly inward rectifying potassium channel. Channel activity is modulated by activation of serotonin receptors. Heterodimeric channels containing KCNK1 and KCNK2 have much higher activity, and may represent the predominant form in astrocytes. Heterodimeric channels containing KCNK1 and KCNK3 or KCNK9 have much higher activity. Heterodimeric channels formed by KCNK1 and KCNK9 may contribute to halothane-sensitive currents. Mediates outward rectifying potassium currents in dentate gyrus granule cells and contributes to the regulation of their resting membrane potential. Contributes to the regulation of action potential firing in dentate gyrus granule cells and down-regulates their intrinsic excitability. In astrocytes, the heterodimer formed by KCNK1 and KCNK2 is required for rapid glutamate release in response to activation of G-protein coupled receptors, such as F2R and CNR1. Required for normal ion and water transport in the kidney. Contributes to the regulation of the resting membrane potential of pancreatic beta cells. The low channel activity of homodimeric KCNK1 may be due to sumoylation. The low channel activity may be due to rapid internalization from the cell membrane and retention in recycling endosomes. Permeable to monovalent cations with ion selectivity for K(+) &gt; Rb(+) &gt;&gt; NH4(+) &gt;&gt; Cs(+) = Na(+) = Li(+). This chain is Potassium channel subfamily K member 1 (Kcnk1), found in Mus musculus (Mouse).